Reading from the N-terminus, the 434-residue chain is MAIRLNYLDTSFERDFAAFLTTKREVSEDVNAVVRAIIDDVRARGDAALADYSARFDGIDFTVTGMAVTSAEIDAAIHAVAPEVLGALKVAATRIEAHHRRQLPKDDIYEDQMGVGLGSRWTPIDAVGLYVPGGTASYPSSVLMNALPAKVAGVPRIVMVVPASGGSINPAVLAAARLAGVEEIYRIGGAQAVAALAYGTETIEPVAKIVGPGNAYVAAAKRQVFGTVGIDMIAGPSEVLVIADRDNDPDWIAADLLAQAEHDAGAQAILITDDAAFGDAVEKAVERQLKTLPRAETAAASWRDFGAVILVPDFDKAVPLANRIAPEHLELATADPDAMVPAIRNAGAIFIGRHTPEVIGDYVGGSNHVLPTARSARFSSGLGVLDYVKRTSILRLGPDQLRILGPAAIALARSEGLEAHARSVAIRLNLGEEG.

NAD(+) is bound by residues Tyr130, Gln191, and Asn214. Substrate is bound by residues Ser237, Gln259, and His262. Zn(2+) contacts are provided by Gln259 and His262. Catalysis depends on proton acceptor residues Glu327 and His328. Positions 328, 361, 415, and 420 each coordinate substrate. Asp361 is a binding site for Zn(2+). A Zn(2+)-binding site is contributed by His420.

This sequence belongs to the histidinol dehydrogenase family. Zn(2+) serves as cofactor.

It carries out the reaction L-histidinol + 2 NAD(+) + H2O = L-histidine + 2 NADH + 3 H(+). The protein operates within amino-acid biosynthesis; L-histidine biosynthesis; L-histidine from 5-phospho-alpha-D-ribose 1-diphosphate: step 9/9. In terms of biological role, catalyzes the sequential NAD-dependent oxidations of L-histidinol to L-histidinaldehyde and then to L-histidine. The sequence is that of Histidinol dehydrogenase from Rhizobium meliloti (strain 1021) (Ensifer meliloti).